Here is a 199-residue protein sequence, read N- to C-terminus: Pyridoxal 5'-phosphate synthase subunit PdxT (199 aa).

51–53 (GES) is an L-glutamine binding site. Residue cysteine 83 is the Nucleophile of the active site. L-glutamine is bound by residues arginine 110 and 137 to 138 (IR). Catalysis depends on charge relay system residues histidine 172 and glutamate 174.

It belongs to the glutaminase PdxT/SNO family. As to quaternary structure, in the presence of PdxS, forms a dodecamer of heterodimers. Only shows activity in the heterodimer.

The catalysed reaction is aldehydo-D-ribose 5-phosphate + D-glyceraldehyde 3-phosphate + L-glutamine = pyridoxal 5'-phosphate + L-glutamate + phosphate + 3 H2O + H(+). It catalyses the reaction L-glutamine + H2O = L-glutamate + NH4(+). Its pathway is cofactor biosynthesis; pyridoxal 5'-phosphate biosynthesis. Its function is as follows. Catalyzes the hydrolysis of glutamine to glutamate and ammonia as part of the biosynthesis of pyridoxal 5'-phosphate. The resulting ammonia molecule is channeled to the active site of PdxS. The chain is Pyridoxal 5'-phosphate synthase subunit PdxT from Thermoplasma volcanium (strain ATCC 51530 / DSM 4299 / JCM 9571 / NBRC 15438 / GSS1).